The sequence spans 230 residues: Uracil-DNA glycosylase (230 aa).

The active-site Proton acceptor is D70.

It belongs to the uracil-DNA glycosylase (UDG) superfamily. UNG family.

The protein resides in the cytoplasm. It catalyses the reaction Hydrolyzes single-stranded DNA or mismatched double-stranded DNA and polynucleotides, releasing free uracil.. In terms of biological role, excises uracil residues from the DNA which can arise as a result of misincorporation of dUMP residues by DNA polymerase or due to deamination of cytosine. The chain is Uracil-DNA glycosylase from Pseudomonas fluorescens (strain SBW25).